The following is a 253-amino-acid chain: Coenzyme F420:L-glutamate ligase (253 aa).

GTP is bound by residues 9-12 (LPEI), 38-39 (ST), and lysine 43. An a divalent metal cation-binding site is contributed by aspartate 113. Asparagine 116 contacts GTP. 3 residues coordinate a divalent metal cation: aspartate 148, threonine 149, and glutamate 206. Residue 204–211 (AGEGDDGT) coordinates GTP.

Belongs to the CofE family. In terms of assembly, homodimer. The cofactor is Mg(2+). Mn(2+) is required as a cofactor. Requires K(+) as cofactor.

The catalysed reaction is oxidized coenzyme F420-0 + GTP + L-glutamate = oxidized coenzyme F420-1 + GDP + phosphate + H(+). It carries out the reaction oxidized coenzyme F420-1 + GTP + L-glutamate = oxidized coenzyme F420-2 + GDP + phosphate + H(+). It functions in the pathway cofactor biosynthesis; coenzyme F420 biosynthesis. In terms of biological role, catalyzes the GTP-dependent successive addition of two or more gamma-linked L-glutamates to the L-lactyl phosphodiester of 7,8-didemethyl-8-hydroxy-5-deazariboflavin (F420-0) to form coenzyme F420-0-glutamyl-glutamate (F420-2) or polyglutamated F420 derivatives. This is Coenzyme F420:L-glutamate ligase from Natronomonas pharaonis (strain ATCC 35678 / DSM 2160 / CIP 103997 / JCM 8858 / NBRC 14720 / NCIMB 2260 / Gabara) (Halobacterium pharaonis).